The sequence spans 99 residues: Thylakoid membrane protein ssl2009 (99 aa).

Residues 10 to 30 (GFLLGTVIGGVVGGILGSVLA) traverse the membrane as a helical segment. Residues 50-84 (NLDSEENIELARRRLEDKIAQLNLVIDDVRDQLGH) adopt a coiled-coil conformation.

The protein resides in the cellular thylakoid membrane. In Synechocystis sp. (strain ATCC 27184 / PCC 6803 / Kazusa), this protein is Thylakoid membrane protein ssl2009.